The chain runs to 427 residues: MESLTLQPIARVDGTINLPGSKSVSNRALLLAALAHGKTVLTNLLDSDDVRHMLNALTALGVSYTLSADRTRCEIIGNGGPLHAESARELFLGNAGTAMRPLAAALCLGSNDIVLTGEPRMKERPIGHLVDALRQGGAKITYLEQENYPPLRLQGGFTGGNVDVDGSVSSQFLTALLMTAPLAPEDTVIRIKGDLVSKPYIDITLNLMKTFGVEIENQHYQQFVVKGGQSYQSPGTYLVEGDASSASYFLAAAAIRGGTVKVTGIGRNSMQGDIRFADVLEKMGATICWGDDYISCTRGELNAIDMDMNHIPDAAMTIATAALFAKGTTTLRNIYNWRVKESDRLFAMATELRKVGAEVEEGHDFIRITPPEKLKFAEIATYNDHRMAMCFSLVALSDTPVTILDPKCTAKTFPDYFEQLARISQPG.

3-phosphoshikimate is bound by residues lysine 22, serine 23, and arginine 27. Position 22 (lysine 22) interacts with phosphoenolpyruvate. Residues glycine 96 and arginine 124 each contribute to the phosphoenolpyruvate site. 3-phosphoshikimate-binding residues include serine 169, serine 170, glutamine 171, serine 197, aspartate 313, asparagine 336, and lysine 340. Glutamine 171 provides a ligand contact to phosphoenolpyruvate. The active-site Proton acceptor is the aspartate 313. Phosphoenolpyruvate-binding residues include arginine 344, arginine 386, and lysine 411.

This sequence belongs to the EPSP synthase family. In terms of assembly, monomer.

The protein resides in the cytoplasm. It carries out the reaction 3-phosphoshikimate + phosphoenolpyruvate = 5-O-(1-carboxyvinyl)-3-phosphoshikimate + phosphate. It participates in metabolic intermediate biosynthesis; chorismate biosynthesis; chorismate from D-erythrose 4-phosphate and phosphoenolpyruvate: step 6/7. Catalyzes the transfer of the enolpyruvyl moiety of phosphoenolpyruvate (PEP) to the 5-hydroxyl of shikimate-3-phosphate (S3P) to produce enolpyruvyl shikimate-3-phosphate and inorganic phosphate. This is 3-phosphoshikimate 1-carboxyvinyltransferase from Escherichia coli O6:H1 (strain CFT073 / ATCC 700928 / UPEC).